The sequence spans 431 residues: Histidinol dehydrogenase (431 aa).

3 residues coordinate NAD(+): Tyr-127, Gln-185, and Asn-208. Ser-234, Gln-256, and His-259 together coordinate substrate. 2 residues coordinate Zn(2+): Gln-256 and His-259. Residues Glu-323 and His-324 each act as proton acceptor in the active site. Positions 324, 357, 411, and 416 each coordinate substrate. Asp-357 is a Zn(2+) binding site. Zn(2+) is bound at residue His-416.

This sequence belongs to the histidinol dehydrogenase family. Requires Zn(2+) as cofactor.

The enzyme catalyses L-histidinol + 2 NAD(+) + H2O = L-histidine + 2 NADH + 3 H(+). It participates in amino-acid biosynthesis; L-histidine biosynthesis; L-histidine from 5-phospho-alpha-D-ribose 1-diphosphate: step 9/9. Functionally, catalyzes the sequential NAD-dependent oxidations of L-histidinol to L-histidinaldehyde and then to L-histidine. The polypeptide is Histidinol dehydrogenase (Vibrio cholerae serotype O1 (strain ATCC 39315 / El Tor Inaba N16961)).